A 633-amino-acid polypeptide reads, in one-letter code: Protein CASP (633 aa).

Topologically, residues 1–601 are cytoplasmic; it reads MAVASEALLQ…LLFSRATRGL (601 aa). The segment at 39–60 is disordered; sequence QKTSLDERKELSSKTKEFRKQP. 2 coiled-coil regions span residues 111 to 339 and 369 to 433; these read IEAA…LANK and SLES…VDVE. Residues 602–622 form a helical; Anchor for type IV membrane protein membrane-spanning segment; it reads FFMYLILLHLFIMIVLLKLGI. Over 623 to 633 the chain is Lumenal; it reads AGNTAYTPMNY.

Belongs to the CASP family.

The protein localises to the golgi apparatus membrane. May be involved in intra-Golgi transport. This chain is Protein CASP (coy1), found in Schizosaccharomyces pombe (strain 972 / ATCC 24843) (Fission yeast).